The primary structure comprises 338 residues: Ferrochelatase (338 aa).

Fe cation-binding residues include His-207 and Glu-293.

This sequence belongs to the ferrochelatase family.

The protein localises to the cytoplasm. It catalyses the reaction heme b + 2 H(+) = protoporphyrin IX + Fe(2+). The protein operates within porphyrin-containing compound metabolism; protoheme biosynthesis; protoheme from protoporphyrin-IX: step 1/1. Its function is as follows. Catalyzes the ferrous insertion into protoporphyrin IX. This Shewanella denitrificans (strain OS217 / ATCC BAA-1090 / DSM 15013) protein is Ferrochelatase.